Consider the following 300-residue polypeptide: Tyrosine recombinase XerC (300 aa).

The Core-binding (CB) domain occupies 2-88 (IQEGKLEQQF…SLRSFYTFLL (87 aa)). Residues 109–294 (RLPKFFYSEE…TKEHLKSTYM (186 aa)) form the Tyr recombinase domain. Residues R150, K174, H246, R249, and H272 contribute to the active site. Catalysis depends on Y281, which acts as the O-(3'-phospho-DNA)-tyrosine intermediate.

Belongs to the 'phage' integrase family. XerC subfamily. In terms of assembly, forms a cyclic heterotetrameric complex composed of two molecules of XerC and two molecules of XerD.

The protein resides in the cytoplasm. Its function is as follows. Site-specific tyrosine recombinase, which acts by catalyzing the cutting and rejoining of the recombining DNA molecules. The XerC-XerD complex is essential to convert dimers of the bacterial chromosome into monomers to permit their segregation at cell division. It also contributes to the segregational stability of plasmids. The chain is Tyrosine recombinase XerC from Listeria monocytogenes serovar 1/2a (strain ATCC BAA-679 / EGD-e).